The following is a 109-amino-acid chain: Phosphoribosyl-ATP pyrophosphatase (109 aa).

The protein belongs to the PRA-PH family.

The protein localises to the cytoplasm. It carries out the reaction 1-(5-phospho-beta-D-ribosyl)-ATP + H2O = 1-(5-phospho-beta-D-ribosyl)-5'-AMP + diphosphate + H(+). It participates in amino-acid biosynthesis; L-histidine biosynthesis; L-histidine from 5-phospho-alpha-D-ribose 1-diphosphate: step 2/9. This Alkalilimnicola ehrlichii (strain ATCC BAA-1101 / DSM 17681 / MLHE-1) protein is Phosphoribosyl-ATP pyrophosphatase.